Consider the following 139-residue polypeptide: Nucleoside diphosphate kinase (139 aa).

The ATP site is built by lysine 12, phenylalanine 60, arginine 88, threonine 94, arginine 105, and asparagine 115. Histidine 118 serves as the catalytic Pros-phosphohistidine intermediate.

This sequence belongs to the NDK family. In terms of assembly, homotetramer. Mg(2+) is required as a cofactor.

It is found in the cytoplasm. The enzyme catalyses a 2'-deoxyribonucleoside 5'-diphosphate + ATP = a 2'-deoxyribonucleoside 5'-triphosphate + ADP. The catalysed reaction is a ribonucleoside 5'-diphosphate + ATP = a ribonucleoside 5'-triphosphate + ADP. Major role in the synthesis of nucleoside triphosphates other than ATP. The ATP gamma phosphate is transferred to the NDP beta phosphate via a ping-pong mechanism, using a phosphorylated active-site intermediate. In Caldanaerobacter subterraneus subsp. tengcongensis (strain DSM 15242 / JCM 11007 / NBRC 100824 / MB4) (Thermoanaerobacter tengcongensis), this protein is Nucleoside diphosphate kinase.